A 461-amino-acid chain; its full sequence is Trigger factor (461 aa).

A PPIase FKBP-type domain is found at glycine 166–proline 245.

It belongs to the FKBP-type PPIase family. Tig subfamily.

The protein resides in the cytoplasm. It carries out the reaction [protein]-peptidylproline (omega=180) = [protein]-peptidylproline (omega=0). Involved in protein export. Acts as a chaperone by maintaining the newly synthesized protein in an open conformation. Functions as a peptidyl-prolyl cis-trans isomerase. The chain is Trigger factor from Bifidobacterium animalis subsp. lactis (strain AD011).